The primary structure comprises 435 residues: T-cell defective protein 2 (435 aa).

The disordered stretch occupies residues 65-146; that stretch reads NASTSFQSQP…KTPDSLRKSI (82 aa). Positions 322 to 352 form a coiled coil; it reads TKISAKKEKEQKKSAAKEAALKEAKEKEMRI. The tract at residues 393 to 419 is disordered; it reads FFKANPPPAPRAPQAPELASGPRRIPT.

In terms of tissue distribution, strongly expressed in the cytoplasm of the pharynx muscle cells and several head neurons, probably the IL1s or IL2s, throughout development. Also expressed in some other unidentified neurons in the tail region. Weakly expressed in the nuclei of the T-cells and the T-cell daughters. Not expressed in gonads and in P12 cell.

The protein localises to the nucleus. It localises to the cytoplasm. Functionally, may act synergistically with the Wnt pathways to control T-cell fate specification, gonad development, and P12 cell fate specification. Required for the distribution of pop-1 and tlp-1 proteins. The protein is T-cell defective protein 2 (tcl-2) of Caenorhabditis elegans.